The sequence spans 588 residues: MRTHFCGLVDETLIGQTVTLAGWTDVARNLGGVCFIDLRDHEGIVQVTVEPVAGDDASAELFKVAASLGYEDVLQVEGVVRARHAVNDKLRTGKVEVIATRISILNKAAPLPFHAHENPGEETRLKYRYLDLRRPEMQRMQRTRIKLVQALRRHLDARDFQDIETPILTKATPEGARDFLVPARMHPGEFYALPQSPQLFKQILMVAGFDRYYQIARCFRDEALRADRQLEFTQLDMEFAFVRERDVQDFVEDMMRAIFKEVVDVDLAAQFPRMTWAEAMRRYGSDKPDLRIALELVDVAELVKSSEFPVFTAAANDADGRVAALRIPGGATLSRKQIDDYAAHAAKYGAKGLAYIKLSETGEVNSPIAKFFGEEAFAALLKHVGAGNGDIVFFGAGGYTKVSDFMGALRLKAGKEFDLVAEGWAPLWVTDFPMFEWDDEAQRYVALHHPFTAPAVDDIADLRANARTAVSRGYDMVLNGNEIGGGSIRIHRPDMQSAVFELLGIGAEEARAKFGFLLDALNYGAPPHGGIAFGIDRIAALMAGTESIRDVIPFPKTTGAQDLMTDAPSPIAADQLAEVHVQIRAKQV.

E174 provides a ligand contact to L-aspartate. Positions 198–201 (QLFK) are aspartate. Residue R220 participates in L-aspartate binding. Residues 220-222 (RDE) and Q229 each bind ATP. H448 is an L-aspartate binding site. ATP is bound at residue E482. R489 provides a ligand contact to L-aspartate. Residue 534-537 (GIDR) coordinates ATP.

This sequence belongs to the class-II aminoacyl-tRNA synthetase family. Type 1 subfamily. Homodimer.

It localises to the cytoplasm. The enzyme catalyses tRNA(Asp) + L-aspartate + ATP = L-aspartyl-tRNA(Asp) + AMP + diphosphate. Its function is as follows. Catalyzes the attachment of L-aspartate to tRNA(Asp) in a two-step reaction: L-aspartate is first activated by ATP to form Asp-AMP and then transferred to the acceptor end of tRNA(Asp). The chain is Aspartate--tRNA ligase from Xanthomonas oryzae pv. oryzae (strain PXO99A).